Consider the following 67-residue polypeptide: Amphipathic peptide Tx348 (67 aa).

An N-terminal signal peptide occupies residues Met-1–Ala-23. Phe-33 bears the Phenylalanine amide mark. Residues Ser-37–Tyr-67 constitute a propeptide that is removed on maturation.

Belongs to the non-disulfide-bridged peptide (NDBP) superfamily. Short antimicrobial peptide (group 4) family. In terms of tissue distribution, expressed by the venom gland.

It localises to the secreted. The protein resides in the target cell membrane. Its function is as follows. Amphipathic peptide that has antibacterial activities. The chain is Amphipathic peptide Tx348 from Buthus israelis (Israeli scorpion).